We begin with the raw amino-acid sequence, 245 residues long: MTSPATLVLIPARMAATRLPGKPLLDIAGLPMVVQVLRRAQAAEIGRVAVATDAPEIAAAVTAHGGEVVMTRADHPSGSDRIFEALQTLDPDRKIETVINLQGDFPTIRPEQIGAVLEPLADPAVDIATLAAEIHTEEEATNPNVVKVIGSPLAADRLRALYFTRATAPWGDGPRYHHIGLYGYRRAALERFVALPPSPLELREKLEQLRALEAGMRIDVGIVDTVPRGVDTPADLETARRVLGG.

This sequence belongs to the KdsB family.

The protein resides in the cytoplasm. It carries out the reaction 3-deoxy-alpha-D-manno-oct-2-ulosonate + CTP = CMP-3-deoxy-beta-D-manno-octulosonate + diphosphate. It participates in nucleotide-sugar biosynthesis; CMP-3-deoxy-D-manno-octulosonate biosynthesis; CMP-3-deoxy-D-manno-octulosonate from 3-deoxy-D-manno-octulosonate and CTP: step 1/1. It functions in the pathway bacterial outer membrane biogenesis; lipopolysaccharide biosynthesis. In terms of biological role, activates KDO (a required 8-carbon sugar) for incorporation into bacterial lipopolysaccharide in Gram-negative bacteria. The sequence is that of 3-deoxy-manno-octulosonate cytidylyltransferase from Rhodopseudomonas palustris (strain ATCC BAA-98 / CGA009).